A 354-amino-acid chain; its full sequence is S-adenosylmethionine:tRNA ribosyltransferase-isomerase (354 aa).

Belongs to the QueA family. As to quaternary structure, monomer.

The protein localises to the cytoplasm. The enzyme catalyses 7-aminomethyl-7-carbaguanosine(34) in tRNA + S-adenosyl-L-methionine = epoxyqueuosine(34) in tRNA + adenine + L-methionine + 2 H(+). It participates in tRNA modification; tRNA-queuosine biosynthesis. Its function is as follows. Transfers and isomerizes the ribose moiety from AdoMet to the 7-aminomethyl group of 7-deazaguanine (preQ1-tRNA) to give epoxyqueuosine (oQ-tRNA). In Azorhizobium caulinodans (strain ATCC 43989 / DSM 5975 / JCM 20966 / LMG 6465 / NBRC 14845 / NCIMB 13405 / ORS 571), this protein is S-adenosylmethionine:tRNA ribosyltransferase-isomerase.